Here is a 723-residue protein sequence, read N- to C-terminus: CSC1-like protein ERD4 (723 aa).

Over 1-5 (MEFAS) the chain is Cytoplasmic. A helical membrane pass occupies residues 6–26 (FLVSLGTSAIIFVVLMFLFTW). Residues 27–90 (LSRRPGNVPV…TAVYFVFQST (64 aa)) lie on the Extracellular side of the membrane. Residues 91-111 (VLGIFALSALLLLPTLLPIAA) traverse the membrane as a helical segment. At 112-148 (TDNNLETSRSATDTTSNGTFSQLDNLSMANITKSSSR) the chain is on the cytoplasmic side. A helical transmembrane segment spans residues 149–169 (LWAFLGAVYWVSVVTYFMLWK). Residues 170–364 (AYKHVAALRA…IKFFSRIVRQ (195 aa)) lie on the Extracellular side of the membrane. The chain crosses the membrane as a helical span at residues 365-385 (YVIYFLVAITILFYMIPIAFV). Residues 386 to 416 (SAITTLANLQKALPFLKPIVDIAFIRTILES) are Cytoplasmic-facing. Residues 417-437 (YLPQIALIVFLAMLPKFLMFL) traverse the membrane as a helical segment. Over 438 to 456 (SKSEGIPSQSHAIRATSGK) the chain is Extracellular. A helical transmembrane segment spans residues 457–477 (YFYFSVLNVFIGVTLAGSLFE). Residues 478 to 508 (NLKALEEKPNSFITLLATSLPKSATFFLTYV) lie on the Cytoplasmic side of the membrane. The helical transmembrane segment at 509–529 (ALKFFVGYGLELSRIIPLIIF) threads the bilayer. At 530-572 (HLKKKYLCKTEAEVKEAWYPGDLSYATRVPSDMLILTITFCYS) the chain is on the extracellular side. The helical transmembrane segment at 573-593 (VIAPLILVFGVIYFGLGWLIL) threads the bilayer. At 594 to 614 (RNQALKVYVPSYESYGRMWPH) the chain is on the cytoplasmic side. A helical membrane pass occupies residues 615–635 (IHTRILAALFLFQLVMFGYLG). Topologically, residues 636–637 (VK) are extracellular. A helical transmembrane segment spans residues 638 to 658 (IFVWAILLVPLIFISLIFGYV). Over 659-723 (CRQKFYGGFE…YQDYAAISAA (65 aa)) the chain is Cytoplasmic.

Belongs to the CSC1 (TC 1.A.17) family.

The protein localises to the plastid. It is found in the chloroplast membrane. Acts as an osmosensitive calcium-permeable cation channel. In Brassica juncea (Indian mustard), this protein is CSC1-like protein ERD4 (ERD4).